Reading from the N-terminus, the 823-residue chain is Trimethylamine-N-oxide reductase (823 aa).

The segment at residues 1–32 (MKQSRRQFLKNMSAMAATFAMPNFLIAQNAFA) is a signal peptide (tat-type signal). Residue Ser181 participates in Mo-bis(molybdopterin guanine dinucleotide) binding.

The protein belongs to the prokaryotic molybdopterin-containing oxidoreductase family. Mo-bis(molybdopterin guanine dinucleotide) is required as a cofactor. Predicted to be exported by the Tat system. The position of the signal peptide cleavage has not been experimentally proven.

The protein resides in the periplasm. It carries out the reaction trimethylamine + 2 Fe(III)-[cytochrome c] + H2O = trimethylamine N-oxide + 2 Fe(II)-[cytochrome c] + 3 H(+). Reduces trimethylamine-N-oxide (TMAO) into trimethylamine; an anaerobic reaction coupled to energy-yielding reactions. The protein is Trimethylamine-N-oxide reductase (torA) of Pasteurella multocida (strain Pm70).